A 110-amino-acid chain; its full sequence is Large ribosomal subunit protein uL22 (110 aa).

It belongs to the universal ribosomal protein uL22 family. As to quaternary structure, part of the 50S ribosomal subunit.

In terms of biological role, this protein binds specifically to 23S rRNA; its binding is stimulated by other ribosomal proteins, e.g. L4, L17, and L20. It is important during the early stages of 50S assembly. It makes multiple contacts with different domains of the 23S rRNA in the assembled 50S subunit and ribosome. The globular domain of the protein is located near the polypeptide exit tunnel on the outside of the subunit, while an extended beta-hairpin is found that lines the wall of the exit tunnel in the center of the 70S ribosome. In Shewanella halifaxensis (strain HAW-EB4), this protein is Large ribosomal subunit protein uL22.